Here is a 342-residue protein sequence, read N- to C-terminus: Foldase protein PrsA (342 aa).

Positions M1 to A20 are cleaved as a signal peptide. C21 carries N-palmitoyl cysteine lipidation. C21 carries the S-diacylglycerol cysteine lipid modification. Positions H142–V235 constitute a PpiC domain. The tract at residues M297–K342 is disordered. A compositionally biased stretch (basic and acidic residues) spans S306–T330. The segment covering D331–K342 has biased composition (low complexity).

It belongs to the PrsA family.

The protein localises to the cell membrane. The catalysed reaction is [protein]-peptidylproline (omega=180) = [protein]-peptidylproline (omega=0). Its function is as follows. Plays a major role in protein secretion by helping the post-translocational extracellular folding of several secreted proteins. In Enterococcus faecalis (strain ATCC 700802 / V583), this protein is Foldase protein PrsA.